An 87-amino-acid chain; its full sequence is MSWPRGDSKKKKIEGGETLLDNRVARPHHILPLPQIQNCIRERRKKKGIYIPHTLIFWMCPRAMGTAITFEFLQPKAQPRVHRDSPT.

Residues 48-70 form a helical membrane-spanning segment; sequence GIYIPHTLIFWMCPRAMGTAITF.

It localises to the host membrane. This is an uncharacterized protein from Gallid herpesvirus 2 (strain Chicken/Md5/ATCC VR-987) (GaHV-2).